We begin with the raw amino-acid sequence, 556 residues long: HIRA-interacting protein 3 (556 aa).

Residue S27 is modified to Phosphoserine. Positions 64 to 77 (DEAASREDKLDLTK) are enriched in basic and acidic residues. Positions 64–426 (DEAASREDKL…GRRGEDHPAV (363 aa)) are disordered. Position 84 is a phosphothreonine (T84). A phosphoserine mark is found at S87, S98, S100, S125, S142, S143, S159, and S160. A compositionally biased stretch (low complexity) spans 99 to 108 (ESESGSEASS). Basic and acidic residues predominate over residues 126–158 (PAKEENPRRASKAVEESSDEERQRDLPAQRGEE). A compositionally biased stretch (basic residues) spans 168–177 (KGKTRKKPVV). Phosphoserine is present on residues S196, S199, S223, and S227. The segment covering 209–224 (KKVEGNKGTKSLKESE) has biased composition (basic and acidic residues). Positions 240–254 (EEEVEEEEKEEDEEK) are enriched in acidic residues. Residues 260–269 (RTRSNGRRKS) show a composition bias toward basic residues. 2 positions are modified to phosphoserine: S289 and S291. Residues 304-322 (DSGRDREPPVQRKSEDRTQ) show a composition bias toward basic and acidic residues. 4 positions are modified to phosphoserine: S330, S332, S333, and S357. T358 carries the phosphothreonine modification. 4 positions are modified to phosphoserine: S359, S363, S370, and S372. A compositionally biased stretch (basic residues) spans 385–396 (RSSKKSSRKGRT). Positions 403 to 527 (SDGSPEAKGG…APPGELYRRT (125 aa)) are interaction with the histone H2A-H2B complex. A Phosphothreonine modification is found at T471. The disordered stretch occupies residues 502-556 (SGRPRRRTAWNPLGEAAPPGELYRRTLDSDEERPRPAPPDWSHMRGIISSDGESN). Basic and acidic residues predominate over residues 523–536 (LYRRTLDSDEERPR). Phosphoserine occurs at positions 530, 550, 551, and 555.

Interacts (via C-terminus) with histone H2A-H2B dimers; the interaction is direct. Interacts with HIRA. Interacts with CK2. In terms of processing, phosphorylated by CK2. In terms of tissue distribution, widely expressed. Isoform 1 is predominant in skeletal muscle. Isoform 2 is predominant in liver and heart.

Its subcellular location is the nucleus. Functionally, histone chaperone that carries a H2A-H2B histone complex and facilitates its deposition onto chromatin. This Homo sapiens (Human) protein is HIRA-interacting protein 3 (HIRIP3).